We begin with the raw amino-acid sequence, 442 residues long: Putative toxin YopC (442 aa).

It in the C-terminal section; belongs to the MbcT/ParT/Res family. As to quaternary structure, forms a complex with cognate antitoxin YopB.

Its function is as follows. May be the toxic component of a type II toxin-antitoxin (TA) system. Neutralized by its cognate antitoxin YopB. The sequence is that of Putative toxin YopC (yopC) from Bacillus subtilis (strain 168).